The sequence spans 178 residues: ATP-dependent protease subunit HslV (178 aa).

The active site involves Thr-7. Residues Gly-162, Cys-165, and Thr-168 each contribute to the Na(+) site.

It belongs to the peptidase T1B family. HslV subfamily. As to quaternary structure, a double ring-shaped homohexamer of HslV is capped on each side by a ring-shaped HslU homohexamer. The assembly of the HslU/HslV complex is dependent on binding of ATP.

The protein localises to the cytoplasm. The catalysed reaction is ATP-dependent cleavage of peptide bonds with broad specificity.. Allosterically activated by HslU binding. Functionally, protease subunit of a proteasome-like degradation complex believed to be a general protein degrading machinery. In Ralstonia nicotianae (strain ATCC BAA-1114 / GMI1000) (Ralstonia solanacearum), this protein is ATP-dependent protease subunit HslV.